Here is a 375-residue protein sequence, read N- to C-terminus: Chaperone protein DnaJ (375 aa).

The J domain occupies 5-70 (DYYEVLEISR…QKRQAYDRFG (66 aa)). The segment at 133-211 (GKEVTIQIPS…CHGHGRVRRN (79 aa)) adopts a CR-type zinc-finger fold. 8 residues coordinate Zn(2+): cysteine 146, cysteine 149, cysteine 163, cysteine 166, cysteine 185, cysteine 188, cysteine 199, and cysteine 202. CXXCXGXG motif repeat units follow at residues 146–153 (CEVCRGSG), 163–170 (CATCGGRG), 185–192 (CPQCNGSG), and 199–206 (CTNCHGHG).

The protein belongs to the DnaJ family. As to quaternary structure, homodimer. Zn(2+) serves as cofactor.

Its subcellular location is the cytoplasm. Participates actively in the response to hyperosmotic and heat shock by preventing the aggregation of stress-denatured proteins and by disaggregating proteins, also in an autonomous, DnaK-independent fashion. Unfolded proteins bind initially to DnaJ; upon interaction with the DnaJ-bound protein, DnaK hydrolyzes its bound ATP, resulting in the formation of a stable complex. GrpE releases ADP from DnaK; ATP binding to DnaK triggers the release of the substrate protein, thus completing the reaction cycle. Several rounds of ATP-dependent interactions between DnaJ, DnaK and GrpE are required for fully efficient folding. Also involved, together with DnaK and GrpE, in the DNA replication of plasmids through activation of initiation proteins. The protein is Chaperone protein DnaJ of Acidithiobacillus ferrooxidans (strain ATCC 23270 / DSM 14882 / CIP 104768 / NCIMB 8455) (Ferrobacillus ferrooxidans (strain ATCC 23270)).